Consider the following 196-residue polypeptide: DnaA initiator-associating protein DiaA (196 aa).

Residues 34 to 196 (LVQSLLNGNK…DNTLFPHQDD (163 aa)) form the SIS domain.

It belongs to the SIS family. DiaA subfamily. In terms of assembly, homotetramer; dimer of dimers.

Required for the timely initiation of chromosomal replication via direct interactions with the DnaA initiator protein. The polypeptide is DnaA initiator-associating protein DiaA (Klebsiella pneumoniae (strain 342)).